Reading from the N-terminus, the 401-residue chain is Glutamyl-tRNA reductase (401 aa).

Substrate contacts are provided by residues 49-52 (TCNR), S92, 97-99 (END), and Q103. Residue C50 is the Nucleophile of the active site. 171-176 (GNGKMA) is an NADP(+) binding site.

This sequence belongs to the glutamyl-tRNA reductase family. As to quaternary structure, homodimer.

It catalyses the reaction (S)-4-amino-5-oxopentanoate + tRNA(Glu) + NADP(+) = L-glutamyl-tRNA(Glu) + NADPH + H(+). Its pathway is porphyrin-containing compound metabolism; protoporphyrin-IX biosynthesis; 5-aminolevulinate from L-glutamyl-tRNA(Glu): step 1/2. In terms of biological role, catalyzes the NADPH-dependent reduction of glutamyl-tRNA(Glu) to glutamate 1-semialdehyde (GSA). This is Glutamyl-tRNA reductase from Picrophilus torridus (strain ATCC 700027 / DSM 9790 / JCM 10055 / NBRC 100828 / KAW 2/3).